We begin with the raw amino-acid sequence, 1515 residues long: Neurite extension and migration factor (1515 aa).

Basic and acidic residues predominate over residues D381 to E405. 6 disordered regions span residues D381 to G415, V505 to R529, K731 to E774, F1158 to G1225, T1372 to R1422, and T1435 to T1479. Composition is skewed to polar residues over residues S746–N757 and T763–M772. A compositionally biased stretch (low complexity) spans P1180 to K1193. Basic residues predominate over residues T1442–S1452. Residues G1455–T1479 show a composition bias toward basic and acidic residues.

Expressed in the brain, particularly during the late embryonic and perinatal stages of development. In the developing brain, it is expressed only in the cortical plate and subplate region but not in the intermediate or ventricular zone.

It localises to the nucleus. Its subcellular location is the cytoplasm. Functionally, involved in neurite outgrowth by regulating cell-cell adhesion via the N-cadherin signaling pathway. May act by regulating expression of protein-coding genes, such as N-cadherins and integrin beta-1 (ITGB1). This Mus musculus (Mouse) protein is Neurite extension and migration factor.